Consider the following 521-residue polypeptide: Bifunctional purine biosynthesis protein PurH (521 aa).

The region spanning 1–145 is the MGS-like domain; it reads MIKQALISVS…KNHRDVTVVV (145 aa).

This sequence belongs to the PurH family.

It catalyses the reaction (6R)-10-formyltetrahydrofolate + 5-amino-1-(5-phospho-beta-D-ribosyl)imidazole-4-carboxamide = 5-formamido-1-(5-phospho-D-ribosyl)imidazole-4-carboxamide + (6S)-5,6,7,8-tetrahydrofolate. It carries out the reaction IMP + H2O = 5-formamido-1-(5-phospho-D-ribosyl)imidazole-4-carboxamide. It participates in purine metabolism; IMP biosynthesis via de novo pathway; 5-formamido-1-(5-phospho-D-ribosyl)imidazole-4-carboxamide from 5-amino-1-(5-phospho-D-ribosyl)imidazole-4-carboxamide (10-formyl THF route): step 1/1. It functions in the pathway purine metabolism; IMP biosynthesis via de novo pathway; IMP from 5-formamido-1-(5-phospho-D-ribosyl)imidazole-4-carboxamide: step 1/1. This Paraburkholderia phymatum (strain DSM 17167 / CIP 108236 / LMG 21445 / STM815) (Burkholderia phymatum) protein is Bifunctional purine biosynthesis protein PurH.